We begin with the raw amino-acid sequence, 449 residues long: Kynurenine 3-monooxygenase (449 aa).

This sequence belongs to the aromatic-ring hydroxylase family. KMO subfamily. FAD serves as cofactor.

The enzyme catalyses L-kynurenine + NADPH + O2 + H(+) = 3-hydroxy-L-kynurenine + NADP(+) + H2O. It participates in cofactor biosynthesis; NAD(+) biosynthesis; quinolinate from L-kynurenine: step 1/3. In terms of biological role, catalyzes the hydroxylation of L-kynurenine (L-Kyn) to form 3-hydroxy-L-kynurenine (L-3OHKyn). Required for synthesis of quinolinic acid. The chain is Kynurenine 3-monooxygenase from Cytophaga hutchinsonii (strain ATCC 33406 / DSM 1761 / CIP 103989 / NBRC 15051 / NCIMB 9469 / D465).